We begin with the raw amino-acid sequence, 362 residues long: Talin rod domain-containing protein 1 (362 aa).

Residues 1–26 (MASGSAGKPTGEAASPAPASAIGGAS) form a disordered region. At alanine 2 the chain carries N-acetylalanine. A compositionally biased stretch (low complexity) spans 13 to 26 (AASPAPASAIGGAS).

May homodimerize. Interacts with F-actin.

Actin-binding protein which may have an oncogenic function and regulates cell proliferation, migration and invasion in cancer cells. The protein is Talin rod domain-containing protein 1 of Homo sapiens (Human).